The primary structure comprises 465 residues: UDP-N-acetylmuramoylalanine--D-glutamate ligase (465 aa).

An ATP-binding site is contributed by 124-130 (GSDGKTT).

It belongs to the MurCDEF family.

It localises to the cytoplasm. It catalyses the reaction UDP-N-acetyl-alpha-D-muramoyl-L-alanine + D-glutamate + ATP = UDP-N-acetyl-alpha-D-muramoyl-L-alanyl-D-glutamate + ADP + phosphate + H(+). The protein operates within cell wall biogenesis; peptidoglycan biosynthesis. Functionally, cell wall formation. Catalyzes the addition of glutamate to the nucleotide precursor UDP-N-acetylmuramoyl-L-alanine (UMA). This chain is UDP-N-acetylmuramoylalanine--D-glutamate ligase, found in Ruminiclostridium cellulolyticum (strain ATCC 35319 / DSM 5812 / JCM 6584 / H10) (Clostridium cellulolyticum).